The following is a 148-amino-acid chain: UPF0758 protein YeeS (148 aa).

Positions A26–L148 constitute an MPN domain. Residues H97, H99, and D110 each coordinate Zn(2+). Residues H97–D110 carry the JAMM motif motif.

It belongs to the UPF0758 family.

This Escherichia coli (strain K12) protein is UPF0758 protein YeeS (yeeS).